The chain runs to 167 residues: U-scoloptoxin-Er5c (167 aa).

Positions methionine 1–glycine 22 are cleaved as a signal peptide. A propeptide spanning residues glutamate 23–arginine 94 is cleaved from the precursor. RLWRNWE repeat units follow at residues arginine 34–glutamate 40, arginine 61–glutamate 67, and arginine 86–glutamate 92. Residue glutamine 95 is modified to Pyrrolidone carboxylic acid. Residues glutamate 107–glutamate 113 form an RLWRNWE 4; approximate repeat. Positions tryptophan 112–arginine 118 are excised as a propeptide. Pyrrolidone carboxylic acid is present on glutamine 119. The RLWRNWE 5 repeat unit spans residues arginine 134–glutamate 140. Residues tryptophan 139–glutamate 167 constitute a propeptide that is removed on maturation. The tract at residues arginine 147 to glutamate 167 is disordered.

It belongs to the scoloptoxin-08 family. As to expression, expressed by the venom gland.

It is found in the secreted. The protein is U-scoloptoxin-Er5c of Ethmostigmus rubripes (Giant centipede).